The chain runs to 391 residues: ATP-sensitive inward rectifier potassium channel 1 (391 aa).

Residues 1–77 (MNASSRNVFD…IWTTVLDLKW (77 aa)) are Cytoplasmic-facing. Phosphoserine; by SGK1 is present on Ser-44. The chain crosses the membrane as a helical span at residues 78-102 (RYKMTIFITAFLGSWFFFGLLWYAV). Residues 103–127 (AYIHKDLPEFHPSANHTPCVENING) lie on the Extracellular side of the membrane. N-linked (GlcNAc...) asparagine glycosylation is present at Asn-117. An intramembrane region (helical; Pore-forming) is located at residues 128–139 (LTSAFLFSLETQ). Residues 140 to 146 (VTIGYGF) constitute an intramembrane region (pore-forming). A Selectivity filter motif is present at residues 141–146 (TIGYGF). Residues 147–155 (RCVTEQCAT) lie on the Extracellular side of the membrane. Residues 156–177 (AIFLLIFQSILGVIINSFMCGA) traverse the membrane as a helical segment. The Cytoplasmic segment spans residues 178 to 391 (ILAKISRPKK…EVNETDDTKM (214 aa)). A polyphosphoinositide (PIP2)-binding region spans residues 180–207 (AKISRPKKRAKTITFSKNAVISKRGGKL). 223-230 (GSHIYGKL) is a binding site for ATP.

The protein belongs to the inward rectifier-type potassium channel (TC 1.A.2.1) family. KCNJ1 subfamily. As to quaternary structure, interacts with SGK1 and SLC9A3R2/NHERF2. In terms of processing, phosphorylation at Ser-44 by SGK1 is necessary for its expression at the cell membrane. In terms of tissue distribution, in the kidney and pancreatic islets. Lower levels in skeletal muscle, pancreas, spleen, brain, heart and liver.

The protein resides in the cell membrane. The enzyme catalyses K(+)(in) = K(+)(out). Its activity is regulated as follows. Inhibited by WNK3. Activated by phosphatidylinositol 4,5 biphosphate (PtdIns(4,5)P2). Inward rectifier potassium channels are characterized by a greater tendency to allow potassium to flow into the cell rather than out of it. Their voltage dependence is regulated by the concentration of extracellular potassium; as external potassium is raised, the voltage range of the channel opening shifts to more positive voltages. The inward rectification is mainly due to the blockage of outward current by internal magnesium. This channel is activated by internal ATP and can be blocked by external barium. In the kidney, probably plays a major role in potassium homeostasis. This is ATP-sensitive inward rectifier potassium channel 1 (KCNJ1) from Homo sapiens (Human).